The primary structure comprises 584 residues: Chaperonin GroEL 1 (584 aa).

ATP is bound by residues Thr-29–Pro-32, Asp-86–Thr-90, Gly-413, and Asp-492. The tract at residues Glu-523 to Gly-542 is disordered. Gly residues predominate over residues Gly-530–Gly-542.

This sequence belongs to the chaperonin (HSP60) family. As to quaternary structure, forms a cylinder of 14 subunits composed of two heptameric rings stacked back-to-back. Interacts with the co-chaperonin GroES.

Its subcellular location is the cytoplasm. The enzyme catalyses ATP + H2O + a folded polypeptide = ADP + phosphate + an unfolded polypeptide.. Functionally, together with its co-chaperonin GroES, plays an essential role in assisting protein folding. The GroEL-GroES system forms a nano-cage that allows encapsulation of the non-native substrate proteins and provides a physical environment optimized to promote and accelerate protein folding. The protein is Chaperonin GroEL 1 of Prochlorococcus marinus (strain MIT 9312).